The chain runs to 340 residues: Spermidine synthase 2 (340 aa).

The segment at 1–41 (MSSTQEASVTDLPVKRPREAEEDNNGGAMETENGGGEIKEP) is disordered. Position 2 is an N-acetylserine (Ser-2). One can recognise a PABS domain in the interval 49–286 (PGWFSEISPM…GVIGFMLCSS (238 aa)). Gln-80 lines the S-adenosyl 3-(methylsulfanyl)propylamine pocket. Tyr-110 contributes to the putrescine binding site. S-adenosyl 3-(methylsulfanyl)propylamine-binding positions include Gln-111, Asp-135, Glu-155, 186–187 (DG), and Asp-205. Asp-205 acts as the Proton acceptor in catalysis. Putrescine contacts are provided by residues 205-208 (DSSD) and Tyr-274.

It belongs to the spermidine/spermine synthase family. Heterodimer. Component of a multiprotein complex. Interacts with SPMS and SPDSYN1.

The catalysed reaction is S-adenosyl 3-(methylsulfanyl)propylamine + putrescine = S-methyl-5'-thioadenosine + spermidine + H(+). It functions in the pathway amine and polyamine biosynthesis; spermidine biosynthesis; spermidine from putrescine: step 1/1. The sequence is that of Spermidine synthase 2 (SPDSYN2) from Arabidopsis thaliana (Mouse-ear cress).